The primary structure comprises 310 residues: Aspartate carbamoyltransferase catalytic subunit (310 aa).

Carbamoyl phosphate is bound by residues R55 and T56. K85 serves as a coordination point for L-aspartate. Positions 106, 135, and 138 each coordinate carbamoyl phosphate. L-aspartate is bound by residues R168 and R230. Carbamoyl phosphate contacts are provided by L268 and P269.

Belongs to the aspartate/ornithine carbamoyltransferase superfamily. ATCase family. In terms of assembly, heterododecamer (2C3:3R2) of six catalytic PyrB chains organized as two trimers (C3), and six regulatory PyrI chains organized as three dimers (R2).

The enzyme catalyses carbamoyl phosphate + L-aspartate = N-carbamoyl-L-aspartate + phosphate + H(+). It participates in pyrimidine metabolism; UMP biosynthesis via de novo pathway; (S)-dihydroorotate from bicarbonate: step 2/3. Catalyzes the condensation of carbamoyl phosphate and aspartate to form carbamoyl aspartate and inorganic phosphate, the committed step in the de novo pyrimidine nucleotide biosynthesis pathway. The sequence is that of Aspartate carbamoyltransferase catalytic subunit from Buchnera aphidicola subsp. Acyrthosiphon pisum (strain APS) (Acyrthosiphon pisum symbiotic bacterium).